Here is a 653-residue protein sequence, read N- to C-terminus: N-acetylglucosaminyl-phosphatidylinositol biosynthetic protein gpi1 (653 aa).

8 consecutive transmembrane segments (helical) span residues 43-63 (LIVVTTITSYQSFANFLVDYC), 237-257 (SLFAYFIILLRIINEVILLAI), 327-347 (IFGITMSSFILENLHLVVKLI), 382-402 (FIMKLSVWVIDVWSNFLLHCL), 407-427 (FLVQVVAISGFGGASLMIALI), 485-505 (LLLGTILFTVLIFFLPTIYVF), 520-540 (LAICETMLAFLNHFPLFVTML), and 605-625 (LISLLVGCPVPAIPAEQLYNI).

The protein resides in the membrane. The protein operates within glycolipid biosynthesis; glycosylphosphatidylinositol-anchor biosynthesis. In terms of biological role, necessary for the synthesis of N-acetylglucosaminyl-phosphatidylinositol, the very early intermediate in GPI-anchor biosynthesis. The protein is N-acetylglucosaminyl-phosphatidylinositol biosynthetic protein gpi1 (gpi1) of Schizosaccharomyces pombe (strain 972 / ATCC 24843) (Fission yeast).